The chain runs to 261 residues: Phosphate import ATP-binding protein PstB 4 (261 aa).

Residues 8–256 (IKVNNLSFYY…PHDSRTREYV (249 aa)) form the ABC transporter domain. Residue 40–47 (GPSGCGKS) coordinates ATP.

This sequence belongs to the ABC transporter superfamily. Phosphate importer (TC 3.A.1.7) family. As to quaternary structure, the complex is composed of two ATP-binding proteins (PstB), two transmembrane proteins (PstC and PstA) and a solute-binding protein (PstS).

The protein resides in the cell inner membrane. It catalyses the reaction phosphate(out) + ATP + H2O = ADP + 2 phosphate(in) + H(+). Its function is as follows. Part of the ABC transporter complex PstSACB involved in phosphate import. Responsible for energy coupling to the transport system. This Trichormus variabilis (strain ATCC 29413 / PCC 7937) (Anabaena variabilis) protein is Phosphate import ATP-binding protein PstB 4.